The following is a 258-amino-acid chain: MQSPINSFKKALAEGRTQIGFWLALGDAYSAEVCAGAGFDWLLIDGEHAPQDLRSVLAQLQVIGAYRDCHAAVRVPSADTTVIKQYLDLGAQSLLVPMVDTADEAAAVVRACRYPPGGIRGVGGARASRWGRYPRYLHEADEQVCVVVQAETALALSNLEAIAEVDGIDGVFIGTADLAASLGFPGNPAHPEVQDAILDALQRVRAAGKAPGVLTPVEDLAQKYLAHGAVFVAVGIDTHLLAKQTSALAARFAQVAYS.

Catalysis depends on histidine 48, which acts as the Proton acceptor. Position 149 (glutamine 149) interacts with substrate. Residue glutamate 151 coordinates Mg(2+). 2 residues coordinate substrate: alanine 176 and aspartate 177. Aspartate 177 contacts Mg(2+).

Belongs to the HpcH/HpaI aldolase family.

The enzyme catalyses (S)-4-hydroxy-2-oxopentanoate = acetaldehyde + pyruvate. The protein operates within xenobiotic degradation; biphenyl degradation. In terms of biological role, catalyzes the reversible retro-aldol cleavage of 4-hydroxy-2-oxovalerate to pyruvate and acetaldehyde. This Rhodococcus jostii (strain RHA1) protein is 4-hydroxy-2-oxovalerate aldolase (bphF).